The sequence spans 743 residues: Tudor domain-containing protein 3 (743 aa).

A disordered region spans residues 241–262; sequence KTFGGGGGGARSNLNIGAAGHR. The region spanning 286 to 326 is the UBA domain; it reads LVDEKALKHITEMGFSKEASRQALMDNANNLEAALNVLLNS. Disordered regions lie at residues 327-365 and 380-549; these read SKQKPAVGPPARGRGKGRGRGRSEDEEDLGTARPSAPST and EEPK…CYER. The residue at position 349 (Ser-349) is a Phosphoserine. Basic and acidic residues predominate over residues 414–431; the sequence is PRNDTRQPRNERPPRFQK. Residues 432–445 are compositionally biased toward polar residues; that stretch reads DTPTSKSTVENSVL. At Ser-438 the chain carries Phosphoserine. 2 stretches are compositionally biased toward basic and acidic residues: residues 464–484 and 536–549; these read AEERIKCDRPYSRYDRTKDAS and RENQTGHPDHCYER. Lys-563 participates in a covalent cross-link: Glycyl lysine isopeptide (Lys-Gly) (interchain with G-Cter in SUMO2). The interval 572-603 is disordered; it reads TDYPRPVQSNSLGVPNGETAPPLKGRRVGPIK. A Tudor domain is found at 647 to 707; sequence VWKPGDECFA…KPVQTEAWEE (61 aa). Over residues 711–725 the composition is skewed to basic and acidic residues; sequence YDHTIEFRRGGDGQP. Positions 711 to 743 are disordered; the sequence is YDHTIEFRRGGDGQPRRSTRPTQQFYQPPRARN. Residues 723 to 743 form an EBM motif; may mediate interaction with the EJC region; the sequence is GQPRRSTRPTQQFYQPPRARN.

In terms of assembly, component of mRNA stress granules. Interacts with FMR1, FXR1, FXR2, EWSR1, FUS, SERBP1, EEF1A1 and DDX3X or DDX3Y, and with the small nuclear ribonucleoprotein-associated proteins SNRPB and SNRPN. Interacts with 'Lys-48'-linked tetra-ubiquitin, but not with monoubiquitin or 'Lys-63'-linked ubiquitin chains. May interact with the exon junction complex (EJC) composed at least of CASC3, EIF4A3, MAGOH and RBM8A. Interacts with POLR2A (via the C-terminal domain (CTD)).

It localises to the cytoplasm. Its subcellular location is the nucleus. Its function is as follows. Scaffolding protein that specifically recognizes and binds dimethylarginine-containing proteins. Plays a role in the regulation of translation of target mRNAs by binding Arg/Gly-rich motifs (GAR) in dimethylarginine-containing proteins. In nucleus, acts as a coactivator: recognizes and binds asymmetric dimethylation on the core histone tails associated with transcriptional activation (H3R17me2a and H4R3me2a) and recruits proteins at these arginine-methylated loci. In cytoplasm, acts as an antiviral factor that participates in the assembly of stress granules together with G3BP1. This chain is Tudor domain-containing protein 3 (Tdrd3), found in Mus musculus (Mouse).